Here is a 327-residue protein sequence, read N- to C-terminus: Fructose-1,6-bisphosphatase class 1 (327 aa).

Residues glutamate 84, aspartate 103, leucine 105, and aspartate 106 each coordinate Mg(2+). Residues 106–109 (DGSS), asparagine 197, and lysine 263 each bind substrate. Mg(2+) is bound at residue glutamate 269.

It belongs to the FBPase class 1 family. Homotetramer. The cofactor is Mg(2+).

Its subcellular location is the cytoplasm. The catalysed reaction is beta-D-fructose 1,6-bisphosphate + H2O = beta-D-fructose 6-phosphate + phosphate. It functions in the pathway carbohydrate biosynthesis; gluconeogenesis. This is Fructose-1,6-bisphosphatase class 1 from Idiomarina loihiensis (strain ATCC BAA-735 / DSM 15497 / L2-TR).